Here is a 124-residue protein sequence, read N- to C-terminus: Ribonuclease pancreatic (124 aa).

Over residues Lys-1–Ile-13 the composition is skewed to basic and acidic residues. The interval Lys-1–Asn-24 is disordered. Substrate is bound by residues Lys-7 and Arg-10. His-12 serves as the catalytic Proton acceptor. The segment covering Ser-15–Asn-24 has biased composition (low complexity). 4 disulfides stabilise this stretch: Cys-26–Cys-84, Cys-40–Cys-95, Cys-58–Cys-110, and Cys-65–Cys-72. Asn-34 carries N-linked (GlcNAc...) asparagine; partial glycosylation. Residues Lys-41 to Thr-45, Lys-66, and Arg-85 each bind substrate. The active-site Proton donor is His-119.

Belongs to the pancreatic ribonuclease family. In terms of assembly, monomer. Interacts with and forms tight 1:1 complexes with RNH1. Dimerization of two such complexes may occur. Interaction with RNH1 inhibits this protein. In terms of tissue distribution, pancreas.

The protein localises to the secreted. The enzyme catalyses an [RNA] containing cytidine + H2O = an [RNA]-3'-cytidine-3'-phosphate + a 5'-hydroxy-ribonucleotide-3'-[RNA].. The catalysed reaction is an [RNA] containing uridine + H2O = an [RNA]-3'-uridine-3'-phosphate + a 5'-hydroxy-ribonucleotide-3'-[RNA].. Endonuclease that catalyzes the cleavage of RNA on the 3' side of pyrimidine nucleotides. Acts on single-stranded and double-stranded RNA. The polypeptide is Ribonuclease pancreatic (RNASE1) (Antilocapra americana (Pronghorn)).